The sequence spans 246 residues: Orotidine 5'-phosphate decarboxylase (246 aa).

Residues aspartate 22, lysine 44, 71–80 (DLKYHDIPHT), threonine 130, arginine 191, glutamine 201, glycine 221, and arginine 222 each bind substrate. The active-site Proton donor is lysine 73.

Belongs to the OMP decarboxylase family. Type 1 subfamily. As to quaternary structure, homodimer.

The catalysed reaction is orotidine 5'-phosphate + H(+) = UMP + CO2. It participates in pyrimidine metabolism; UMP biosynthesis via de novo pathway; UMP from orotate: step 2/2. Catalyzes the decarboxylation of orotidine 5'-monophosphate (OMP) to uridine 5'-monophosphate (UMP). This chain is Orotidine 5'-phosphate decarboxylase, found in Neisseria meningitidis serogroup A / serotype 4A (strain DSM 15465 / Z2491).